We begin with the raw amino-acid sequence, 937 residues long: Proprotein convertase subtilisin/kexin type 6 (937 aa).

Positions 1–16 (MPPRAPPAPGPRPPPR) are enriched in pro residues. The tract at residues 1 to 22 (MPPRAPPAPGPRPPPRAAGRHG) is disordered. A signal peptide spans 1–45 (MPPRAPPAPGPRPPPRAAGRHGLSPLAPRPWRWLLLLALPAVCSA). A propeptide spanning residues 46 to 132 (LPPPRPVYTN…QQEVKRRVKR (87 aa)) is cleaved from the precursor. In terms of domain architecture, Peptidase S8 spans 149-468 (MWYMHCADKN…FGLVDAEALV (320 aa)). Catalysis depends on charge relay system residues Asp186 and His227. N-linked (GlcNAc...) asparagine glycosylation is present at Asn240. The Charge relay system role is filled by Ser401. The 141-residue stretch at 476 to 616 (AVPSQHMCVA…SLILYGTAEH (141 aa)) folds into the P/Homo B domain. Residues 534 to 536 (RGD) carry the Cell attachment site motif. Residues 621-656 (FSSHQSRSRMLELSVPEQEPLKAEGPPPQAETPEEE) form a disordered region. FU repeat units lie at residues 660–707 (TGVC…GYFG), 711–758 (ARRC…GLYA), 762–806 (QRLC…GTYF), 810–855 (LIRC…GFYP), and 863–911 (HKVC…ETFC). The segment at 680–898 (CLNCVHFSLG…GFTQLGTSCI (219 aa)) is CRM (Cys-rich motif). Residues Asn882 and Asn900 are each glycosylated (N-linked (GlcNAc...) asparagine). Residues 899–937 (TNHTCSNADETFCEMVKSNRLCERKLFIQFCCRTCLLAG) enclose the PLAC domain.

The protein belongs to the peptidase S8 family. As to quaternary structure, the precursor protein seems to exist in the reticulum endoplasmic as both a monomer and a dimer-sized complex whereas mature form exists only as a monomer, suggesting that propeptide cleavage affects its tertiary or quaternary structure. Interacts (immature form including the propeptide) with RCN3; probably involved in the maturation and the secretion of PCSK6. The cofactor is Ca(2+). In terms of tissue distribution, high expression in the anterior pituitary and in several brain regions, the atrium, and the ventricle.

Serine endoprotease that processes various proproteins by cleavage at paired basic amino acids, recognizing the RXXX[KR]R consensus motif. Likely functions in the constitutive secretory pathway, with unique restricted distribution in both neuroendocrine and non-neuroendocrine tissues. The protein is Proprotein convertase subtilisin/kexin type 6 (Pcsk6) of Rattus norvegicus (Rat).